Consider the following 110-residue polypeptide: Thiosulfate sulfurtransferase GlpE (110 aa).

Positions Arg-17–Ser-105 constitute a Rhodanese domain. Cys-65 acts as the Cysteine persulfide intermediate in catalysis.

The protein belongs to the GlpE family.

It localises to the cytoplasm. It catalyses the reaction thiosulfate + hydrogen cyanide = thiocyanate + sulfite + 2 H(+). The enzyme catalyses thiosulfate + [thioredoxin]-dithiol = [thioredoxin]-disulfide + hydrogen sulfide + sulfite + 2 H(+). In terms of biological role, transferase that catalyzes the transfer of sulfur from thiosulfate to thiophilic acceptors such as cyanide or dithiols. May function in a CysM-independent thiosulfate assimilation pathway by catalyzing the conversion of thiosulfate to sulfite, which can then be used for L-cysteine biosynthesis. In Pseudomonas aeruginosa (strain ATCC 15692 / DSM 22644 / CIP 104116 / JCM 14847 / LMG 12228 / 1C / PRS 101 / PAO1), this protein is Thiosulfate sulfurtransferase GlpE.